Consider the following 715-residue polypeptide: Fatty acid oxidation complex subunit alpha (715 aa).

Residues 1-190 are enoyl-CoA hydratase/isomerase; the sequence is MIYEGKAITV…KVGAVDAVVA (190 aa). Aspartate 297 contributes to the substrate binding site. The segment at 312–715 is 3-hydroxyacyl-CoA dehydrogenase; it reads KDVKQAAVLG…MAKNGQSFFG (404 aa). Residues methionine 325, aspartate 344, 401 to 403, lysine 408, and serine 430 contribute to the NAD(+) site; that span reads VVE. Histidine 451 functions as the For 3-hydroxyacyl-CoA dehydrogenase activity in the catalytic mechanism. NAD(+) is bound at residue asparagine 454. Residues asparagine 501 and tyrosine 660 each contribute to the substrate site.

This sequence in the N-terminal section; belongs to the enoyl-CoA hydratase/isomerase family. In the C-terminal section; belongs to the 3-hydroxyacyl-CoA dehydrogenase family. Heterotetramer of two alpha chains (FadB) and two beta chains (FadA).

The enzyme catalyses a (3S)-3-hydroxyacyl-CoA + NAD(+) = a 3-oxoacyl-CoA + NADH + H(+). The catalysed reaction is a (3S)-3-hydroxyacyl-CoA = a (2E)-enoyl-CoA + H2O. It catalyses the reaction a 4-saturated-(3S)-3-hydroxyacyl-CoA = a (3E)-enoyl-CoA + H2O. It carries out the reaction (3S)-3-hydroxybutanoyl-CoA = (3R)-3-hydroxybutanoyl-CoA. The enzyme catalyses a (3Z)-enoyl-CoA = a 4-saturated (2E)-enoyl-CoA. The catalysed reaction is a (3E)-enoyl-CoA = a 4-saturated (2E)-enoyl-CoA. It participates in lipid metabolism; fatty acid beta-oxidation. In terms of biological role, involved in the aerobic and anaerobic degradation of long-chain fatty acids via beta-oxidation cycle. Catalyzes the formation of 3-oxoacyl-CoA from enoyl-CoA via L-3-hydroxyacyl-CoA. It can also use D-3-hydroxyacyl-CoA and cis-3-enoyl-CoA as substrate. This is Fatty acid oxidation complex subunit alpha from Pseudomonas fluorescens (strain ATCC BAA-477 / NRRL B-23932 / Pf-5).